Consider the following 134-residue polypeptide: Phospholipase A2 (134 aa).

Ca(2+) contacts are provided by Trp-8, Gly-10, and Gly-12. Disulfide bonds link Cys-9-Cys-31, Cys-30-Cys-70, Cys-37-Cys-63, Cys-61-Cys-95, and Cys-105-Cys-113. N-linked (GlcNAc...) asparagine glycosylation occurs at Asn-13. Residue His-34 is part of the active site. Asp-35 contacts Ca(2+). Residue Asp-64 is part of the active site.

Belongs to the phospholipase A2 family. Group III subfamily. It depends on Ca(2+) as a cofactor. As to expression, expressed by the venom gland.

It localises to the secreted. The enzyme catalyses a 1,2-diacyl-sn-glycero-3-phosphocholine + H2O = a 1-acyl-sn-glycero-3-phosphocholine + a fatty acid + H(+). PLA2 catalyzes the calcium-dependent hydrolysis of the 2-acyl groups in 3-sn-phosphoglycerides. This Apis cerana cerana (Oriental honeybee) protein is Phospholipase A2.